The chain runs to 336 residues: Large ribosomal subunit protein mL39 (336 aa).

Residues 60–126 (EKIEVKHVGK…TKSCEIKFLT (67 aa)) form the TGS domain. At lysine 123 the chain carries N6-acetyllysine.

Belongs to the mitochondrion-specific ribosomal protein mL39 family. As to quaternary structure, component of the mitochondrial ribosome large subunit (39S) which comprises a 16S rRNA and about 50 distinct proteins.

The protein resides in the mitochondrion. The protein is Large ribosomal subunit protein mL39 (Mrpl39) of Mus musculus (Mouse).